The primary structure comprises 42 residues: GFGCPGDAYQCSEHCRALGGGRTGGYCAGPWYLGHPTCTCSF.

Residues phenylalanine 2, glycine 3, cysteine 4, and histidine 14 each coordinate beta-D-GlcNAc-(1-&gt;4)-Mur2Ac(oyl-L-Ala-gamma-D-Glu-L-Lys-D-Ala-D-Ala)-di-trans,octa-cis-undecaprenyl diphosphate. 3 cysteine pairs are disulfide-bonded: cysteine 4–cysteine 27, cysteine 11–cysteine 38, and cysteine 15–cysteine 40. Residues 31–35 (WYLGH) are interaction site with membranes lipids. A beta-D-GlcNAc-(1-&gt;4)-Mur2Ac(oyl-L-Ala-gamma-D-Glu-L-Lys-D-Ala-D-Ala)-di-trans,octa-cis-undecaprenyl diphosphate-binding site is contributed by cysteine 38.

It belongs to the invertebrate defensin family.

It localises to the secreted. It is found in the target cell membrane. Antimicrobial peptide that acts against Gram-positive bacteria but not against Gram-negative bacteria. It selectively inhibits peptidoglycan biosynthesis through complex formation with the cell wall precursor lipid II (1:1 molar ratio) thus inhibiting cell wall synthesis. It does not disrupt cell membranes. In vivo, is effective against an intraperitoneal infection with S.pneumoniae. In vitro, it shows very low hemolytic and cytolytic activities. The protein is Fungal defensin eurocin of Aspergillus amstelodami.